A 406-amino-acid chain; its full sequence is Acetate kinase (406 aa).

Residue Asn7 coordinates Mg(2+). Lys14 contacts ATP. Arg90 serves as a coordination point for substrate. Residue Asp147 is the Proton donor/acceptor of the active site. ATP-binding positions include 207-211, 283-285, and 331-335; these read HLGNG, DMR, and GVGEN. Glu385 is a binding site for Mg(2+).

Belongs to the acetokinase family. As to quaternary structure, homodimer. It depends on Mg(2+) as a cofactor. Requires Mn(2+) as cofactor.

It localises to the cytoplasm. It carries out the reaction acetate + ATP = acetyl phosphate + ADP. Its pathway is metabolic intermediate biosynthesis; acetyl-CoA biosynthesis; acetyl-CoA from acetate: step 1/2. Catalyzes the formation of acetyl phosphate from acetate and ATP. Can also catalyze the reverse reaction. In Thermosipho melanesiensis (strain DSM 12029 / CIP 104789 / BI429), this protein is Acetate kinase.